The chain runs to 780 residues: MEQVEILRKFIQRVQAMKSPDHNGEDNFARDFMRLRRLSTKYRTEKIYPTATGEKEENVKKNRYKDILPFDHSRVKLTLKTPSQDSDYINANFIKGVYGPKAYVATQGPLANTVIDFWRMIWEYNVVIIVMACREFEMGRKKCERYWPLYGEDPITFAPFKISCEDEQARTDYFIRTLLLEFQNESRRLYQFHYVNWPDHDVPSSFDSILDMISLMRKYQEHEDVPICIHCSAGCGRTGAICAIDYTWNLLKAGKIPEEFNVFNLIQEMRTQRHSAVQTKEQYELVHRAIAQLFEKQLQLYEIHGAQKIADGVNEINTENMVSSIEPEKQDSPPPKPPRTRSCLVEGDAKEEILQPPEPHPVPPILTPSPPSAFPTVTTVWQDNDRYHPKPVLHMVSSEQHSADLNRNYSKSTELPGKNESTIEQIDKKLERNLSFEIKKVPLQEGPKSFDGNTLLNRGHAIKIKSASPCIADKISKPQELSSDLNVGDTSQNSCVDCSVTQSNKVSVTPPEESQNSDTPPRPDRLPLDEKGHVTWSFHGPENAIPIPDLSEGNSSDINYQTRKTVSLTPSPTTQVETPDLVDHDNTSPLFRTPLSFTNPLHSDDSDSDERNSDGAVTQNKTNISTASATVSAATSTESISTRKVLPMSIARHNIAGTTHSGAEKDVDVSEDSPPPLPERTPESFVLASEHNTPVRSEWSELQSQERSEQKKSEGLITSENEKCDHPAGGIHYEMCIECPPTFSDKREQISENPTEATDIGFGNRCGKPKGPRDPPSEWT.

Met-1 is modified (N-acetylmethionine). Ser-19 is modified (phosphoserine). The Tyrosine-protein phosphatase domain occupies 28–293; sequence FARDFMRLRR…ELVHRAIAQL (266 aa). Substrate is bound by residues Arg-36, 63 to 67, Asp-199, 231 to 237, and Gln-278; these read RYKDI and CSAGCGR. Cys-231 (phosphocysteine intermediate) is an active-site residue. Phosphoserine occurs at positions 332, 435, 449, and 468. The interval 345-438 is interaction with TGFB1I1; it reads VEGDAKEEIL…KLERNLSFEI (94 aa). Over residues 502–519 the composition is skewed to polar residues; the sequence is QSNKVSVTPPEESQNSDT. 3 disordered regions span residues 502 to 639, 657 to 725, and 744 to 780; these read QSNK…STES, GTTH…EKCD, and SDKR…SEWT. Phosphothreonine occurs at positions 509 and 519. The span at 521-533 shows a compositional bias: basic and acidic residues; the sequence is PRPDRLPLDEKGH. Polar residues-rich tracts occupy residues 552-577 and 587-601; these read EGNS…TQVE and TSPL…TNPL. A Phosphoserine modification is found at Ser-567. The residue at position 569 (Thr-569) is a Phosphothreonine. Ser-571 and Ser-596 each carry phosphoserine. The residue at position 598 (Thr-598) is a Phosphothreonine. Positions 602–613 are enriched in basic and acidic residues; the sequence is HSDDSDSDERNS. Phosphoserine is present on residues Ser-603, Ser-606, Ser-608, and Ser-613. The segment covering 622-639 has biased composition (low complexity); that stretch reads TNISTASATVSAATSTES. 2 positions are modified to phosphoserine: Ser-673 and Ser-689. The span at 690 to 703 shows a compositional bias: polar residues; the sequence is EHNTPVRSEWSELQ. Residue Thr-693 is modified to Phosphothreonine. Composition is skewed to basic and acidic residues over residues 704–725 and 771–780; these read SQER…EKCD and GPRDPPSEWT.

The protein belongs to the protein-tyrosine phosphatase family. Non-receptor class 4 subfamily. In terms of assembly, interacts with TGFB1I1. Interacts with PSTPIP1. Interacts with PTK2B/PYK2. Interacts with LPXN. Interacts with SORBS2; this interaction greatly enhances WASF1 dephosphorylation and might mediate partial translocation to focal adhesion sites. Post-translationally, phosphorylated by STK24/MST3 and this results in inhibition of its activity.

Its subcellular location is the cytoplasm. It is found in the cell junction. The protein localises to the focal adhesion. It localises to the cell projection. The protein resides in the podosome. It carries out the reaction O-phospho-L-tyrosyl-[protein] + H2O = L-tyrosyl-[protein] + phosphate. Dephosphorylates a range of proteins, and thereby regulates cellular signaling cascades. Dephosphorylates cellular tyrosine kinases, such as ERBB2 and PTK2B/PYK2, and thereby regulates signaling via ERBB2 and PTK2B/PYK2. Selectively dephosphorylates ERBB2 phosphorylated at 'Tyr-1112', 'Tyr-1196', and/or 'Tyr-1248'. The chain is Tyrosine-protein phosphatase non-receptor type 12 (PTPN12) from Homo sapiens (Human).